A 598-amino-acid polypeptide reads, in one-letter code: Aspartate--tRNA(Asp/Asn) ligase (598 aa).

Glutamate 177 serves as a coordination point for L-aspartate. The segment at 201 to 204 is aspartate; the sequence is QIFK. Residues arginine 223 and histidine 451 each coordinate L-aspartate. 223 to 225 contacts ATP; the sequence is RDE. Residue glutamate 485 participates in ATP binding. Arginine 492 provides a ligand contact to L-aspartate. ATP is bound at residue 537-540; that stretch reads GVDR.

It belongs to the class-II aminoacyl-tRNA synthetase family. Type 1 subfamily. As to quaternary structure, homodimer.

Its subcellular location is the cytoplasm. It carries out the reaction tRNA(Asx) + L-aspartate + ATP = L-aspartyl-tRNA(Asx) + AMP + diphosphate. In terms of biological role, aspartyl-tRNA synthetase with relaxed tRNA specificity since it is able to aspartylate not only its cognate tRNA(Asp) but also tRNA(Asn). Reaction proceeds in two steps: L-aspartate is first activated by ATP to form Asp-AMP and then transferred to the acceptor end of tRNA(Asp/Asn). This chain is Aspartate--tRNA(Asp/Asn) ligase, found in Anaplasma phagocytophilum (strain HZ).